A 945-amino-acid chain; its full sequence is Netrin receptor UNC5B (945 aa).

Positions 1–26 (MGARSGARGALLLALLLCWDPRLSQA) are cleaved as a signal peptide. Over 27 to 377 (GTDSGSEVLP…LEASGDAALY (351 aa)) the chain is Extracellular. The Ig-like domain maps to 48-145 (PYFLQEPQDA…AGTTKSRRAY (98 aa)). 9 cysteine pairs are disulfide-bonded: C69–C130, C81–C128, C174–C225, C258–C295, C262–C299, C273–C285, C314–C348, C318–C353, and C326–C338. Residues 147–242 (RIAYLRKNFD…KRRSTTATVI (96 aa)) enclose the Ig-like C2-type domain. N222 is a glycosylation site (N-linked (GlcNAc...) asparagine). 2 TSP type-1 domains span residues 246–300 (NGGW…TICP) and 302–354 (DGAW…GLCM). A glycan (N-linked (GlcNAc...) asparagine) is linked at N347. The chain crosses the membrane as a helical span at residues 378–398 (AGLVVAIFVVVAILMAVGVVV). The Cytoplasmic segment spans residues 399–945 (YRRNCRDFDT…LVAVATDGDC (547 aa)). Residue C403 is the site of S-palmitoyl cysteine attachment. Residues 543–686 (SSVSGTFGCL…LGTYVFTGES (144 aa)) form the ZU5 domain. Y581 carries the phosphotyrosine modification. A UPA domain region spans residues 689–838 (RSAVKRLQLA…AETPAGSLDT (150 aa)). The tract at residues 707 to 725 (SLEYSLRVYCLEDTPVALK) is interaction with DCC. The 79-residue stretch at 865-943 (KICNSLDAPN…EMLVAVATDG (79 aa)) folds into the Death domain.

It belongs to the unc-5 family. As to quaternary structure, interacts with the cytoplasmic part of DCC. Interacts with GNAI2 via its cytoplasmic part. Interacts (via death domain) with DAPK1 (via death domain). Interacts (via extracellular domain) with FLRT3 (via extracellular domain); the interaction is direct. Interacts (via extracellular domain) with FLRT2 and FLRT3 (via extracellular domain), but has higher affinity for FLRT3. Identified in a complex with FLRT3 and ADGRL3; does not interact with ADGRL3 by itself. Post-translationally, phosphorylated on cytoplasmic tyrosine residues. Proteolytically cleaved by caspases during apoptosis. The cleavage does not take place when the receptor is associated with netrin ligand. Its cleavage by caspases is required to induce apoptosis. In terms of processing, palmitoylation is required for pro-apoptotic activity, but not for location at lipid rafts. In terms of tissue distribution, highly expressed in brain. Also expressed at lower level in developing lung, cartilage, kidney and hematopoietic and immune tissues.

It is found in the cell membrane. It localises to the membrane raft. Functionally, receptor for netrin required for axon guidance. Mediates axon repulsion of neuronal growth cones in the developing nervous system upon ligand binding. Axon repulsion in growth cones may be caused by its association with DCC that may trigger signaling for repulsion. Functions as a netrin receptor that negatively regulates vascular branching during angiogenesis. Mediates retraction of tip cell filopodia on endothelial growth cones in response to netrin. It also acts as a dependence receptor required for apoptosis induction when not associated with netrin ligand. Mediates apoptosis by activating DAPK1. In the absence of NTN1, activates DAPK1 by reducing its autoinhibitory phosphorylation at Ser-308 thereby increasing its catalytic activity. This Homo sapiens (Human) protein is Netrin receptor UNC5B (UNC5B).